We begin with the raw amino-acid sequence, 215 residues long: Pyridoxine/pyridoxamine 5'-phosphate oxidase (215 aa).

Substrate-binding positions include 9 to 12 and Lys-67; that span reads RKEY. FMN-binding positions include 62 to 67, 77 to 78, Lys-84, and Gln-106; these read RIVLLK and YT. 3 residues coordinate substrate: Tyr-124, Arg-128, and Ser-132. FMN-binding positions include 141–142 and Trp-187; that span reads QS. 193 to 195 is a substrate binding site; that stretch reads RLH. Arg-197 contacts FMN.

The protein belongs to the pyridoxamine 5'-phosphate oxidase family. As to quaternary structure, homodimer. FMN serves as cofactor.

The catalysed reaction is pyridoxamine 5'-phosphate + O2 + H2O = pyridoxal 5'-phosphate + H2O2 + NH4(+). The enzyme catalyses pyridoxine 5'-phosphate + O2 = pyridoxal 5'-phosphate + H2O2. It participates in cofactor metabolism; pyridoxal 5'-phosphate salvage; pyridoxal 5'-phosphate from pyridoxamine 5'-phosphate: step 1/1. Its pathway is cofactor metabolism; pyridoxal 5'-phosphate salvage; pyridoxal 5'-phosphate from pyridoxine 5'-phosphate: step 1/1. Its function is as follows. Catalyzes the oxidation of either pyridoxine 5'-phosphate (PNP) or pyridoxamine 5'-phosphate (PMP) into pyridoxal 5'-phosphate (PLP). This is Pyridoxine/pyridoxamine 5'-phosphate oxidase from Cytophaga hutchinsonii (strain ATCC 33406 / DSM 1761 / CIP 103989 / NBRC 15051 / NCIMB 9469 / D465).